Here is a 278-residue protein sequence, read N- to C-terminus: NAD-capped RNA hydrolase NudC (278 aa).

Residue Arg84 coordinates substrate. 2 residues coordinate Zn(2+): Cys114 and Cys117. Glu127 is a substrate binding site. Residue Cys132 participates in Zn(2+) binding. Tyr140 lines the substrate pocket. The 124-residue stretch at 141 to 264 folds into the Nudix hydrolase domain; it reads PRISPSMIVL…SIARYLIEAY (124 aa). Ala174, Glu190, and Glu194 together coordinate a divalent metal cation. Residues 175 to 196 carry the Nudix box motif; it reads GFVEPGESAEDCVHREVMEEVQ. A substrate-binding site is contributed by 208 to 215; that stretch reads QCWPFPHS. Glu235 contributes to the a divalent metal cation binding site. Substrate is bound at residue Ala257.

It belongs to the Nudix hydrolase family. NudC subfamily. As to quaternary structure, homodimer. It depends on Mg(2+) as a cofactor. Mn(2+) is required as a cofactor. Zn(2+) serves as cofactor.

The enzyme catalyses a 5'-end NAD(+)-phospho-ribonucleoside in mRNA + H2O = a 5'-end phospho-adenosine-phospho-ribonucleoside in mRNA + beta-nicotinamide D-ribonucleotide + 2 H(+). The catalysed reaction is NAD(+) + H2O = beta-nicotinamide D-ribonucleotide + AMP + 2 H(+). It catalyses the reaction NADH + H2O = reduced beta-nicotinamide D-ribonucleotide + AMP + 2 H(+). Its function is as follows. mRNA decapping enzyme that specifically removes the nicotinamide adenine dinucleotide (NAD) cap from a subset of mRNAs by hydrolyzing the diphosphate linkage to produce nicotinamide mononucleotide (NMN) and 5' monophosphate mRNA. The NAD-cap is present at the 5'-end of some mRNAs and stabilizes RNA against 5'-processing. Has preference for mRNAs with a 5'-end purine. Catalyzes the hydrolysis of a broad range of dinucleotide pyrophosphates. This chain is NAD-capped RNA hydrolase NudC, found in Pseudomonas syringae pv. syringae (strain B728a).